A 62-amino-acid polypeptide reads, in one-letter code: Coiled-coil domain-containing protein YLR146W-A (62 aa).

Residues 14–49 (EHARMLQNEIQQLFAQLRDTNSQIRCDLNEFEQIKE) are a coiled coil.

The sequence is that of Coiled-coil domain-containing protein YLR146W-A from Saccharomyces cerevisiae (strain ATCC 204508 / S288c) (Baker's yeast).